The primary structure comprises 273 residues: MSDMHSLLVAAILGVVEGLTEFLPVSSTGHMIIVGHLLGFEGETAKTFEVVIQLGSILAVVVMFWRRLFGLIGIHFGRPPQHEGEGKGRLTLIHILLGMVPAVVLGLIFHDAIKSLFNPINVMYALVVGGVLLIAAELLKPKEPKAPGLDDMTYRQAFMIGCFQCLALWPGFSRSGATISGGMLMGVSRYAASEFSFLLAVPMMMGATALDLYKSYHFLTAADFPMFAVGFVTAFLVALVAIKTFLQLIKRISFIPFAIYRFIVAAAVYVVFF.

A run of 7 helical transmembrane segments spans residues 45–65, 90–110, 116–136, 154–173, 190–210, 222–242, and 252–272; these read AKTF…VMFW, LTLI…LIFH, LFNP…LIAA, YRQA…PGFS, YAAS…ATAL, ADFP…LVAI, and ISFI…YVVF.

It belongs to the UppP family.

It localises to the cell inner membrane. It carries out the reaction di-trans,octa-cis-undecaprenyl diphosphate + H2O = di-trans,octa-cis-undecaprenyl phosphate + phosphate + H(+). Functionally, catalyzes the dephosphorylation of undecaprenyl diphosphate (UPP). Confers resistance to bacitracin. The protein is Undecaprenyl-diphosphatase of Enterobacter sp. (strain 638).